The primary structure comprises 142 residues: Salivary protein 15b (142 aa).

An N-terminal signal peptide occupies residues 1 to 20 (MKYLGLALISAVFLIGTCQA). 3 disulfide bridges follow: Cys-27–Cys-44, Cys-40–Cys-108, and Cys-91–Cys-117.

The protein belongs to the PBP/GOBP family. As to expression, female salivary gland.

The protein resides in the secreted. Its function is as follows. Inhibits contact coagulation pathway activation in the host by sequestering anionic polymers, such as dextran sulfate and heparin, and thus blocking interaction of protein components of the pathway with negatively charged surfaces. Inhibits dextran sulfate-mediated autoactivation of host coagulation factor XII (F12). Inhibits dextran sulfate-mediated activation of host factor XI (F11) by activated F12. Inhibits polyphosphate-induced plasma extravasation at the injection site in mouse model, probably via inhibition of bradykinin generation in host skin. This Phlebotomus duboscqi (Sandfly) protein is Salivary protein 15b.